The sequence spans 538 residues: Cytochrome P450 monooxygenase fogE (538 aa).

Residues 4-24 (ASSAILLVALIAALWRLSLIG) form a helical membrane-spanning segment. Cys437 provides a ligand contact to heme.

The protein belongs to the cytochrome P450 family. Heme serves as cofactor.

Its subcellular location is the membrane. It functions in the pathway secondary metabolite biosynthesis. Functionally, cytochrome P450 monooxygenase; part of the gene cluster that mediates the biosynthesis of flavoglaucin and congeners (including aspergin, dihydroauroglaucin and auroglaucin), prenylated salicylaldehyde derivatives carrying a saturated or an unsaturated C-7 side chain. The PKS fogA releases the carboxylic acid (8E,10E,12E)-3,5,7-trihydroxytetradeca-8,10,12-trienoic acid as its product, as well as derivatives with one and two double bonds. FogA is indeed able to reduce the initial triketide, thus being at least partially responsible for the differently saturated heptyl side chains of flavoglaucin congeners. The oxidoreductases fogB, fogC and fogD modify the nascent polyketide in fogA-bound form and, together, fogA, fogB, fogC and fogD are necessary for the formation of the aromatic core and the cyclized PKS products are released as salicyl alcohols. In particular, fogB is responsible for oxidation of a hydroxyl group or reduction of remaining double bond(s) at the C-7 residue whereas fogD is probably involved in the reductive release of the modified PKS products. The cytochrome P450 monooxygenase fogE is then responsible for the hydroxylation at C-3 of the benzene ring. The fogE products are substrates of the prenyltransferase fogH and the prenylated benzyl alcohols are subsequently oxidized by the fogF to produce the final aryl aldehydes flavoglaucin and congeners. The short-chain dehydrogenase fogG does not seem to be involved in the biosynthesis of the prenylated salicylaldehyde derivatives. This chain is Cytochrome P450 monooxygenase fogE, found in Aspergillus ruber (strain CBS 135680).